Here is a 284-residue protein sequence, read N- to C-terminus: NADH-cytochrome b5 reductase 1 (284 aa).

A helical membrane pass occupies residues 7–27; that stretch reads KLVVVIVIVVVPLLFKFIIGP. Residues 38-142 form the FAD-binding FR-type domain; sequence NDFQSFPLVE…KGPRGNYHYE (105 aa). 148-180 is an FAD binding site; that stretch reads HLGMIAGGTGIAPMYQIMKAIAMDSHDTTKVSL.

The protein belongs to the flavoprotein pyridine nucleotide cytochrome reductase family. As to quaternary structure, monomer. Component of the 2-(3-amino-3-carboxypropyl)histidine synthase complex composed of DPH1, DPH2, KTI11/DPH3 and a NADH-dependent reductase, predominantly CBR1. Interacts with KTI11/DPH3. Interacts with STE20. The cofactor is FAD.

It is found in the mitochondrion outer membrane. It carries out the reaction 2 Fe(III)-[cytochrome b5] + NADH = 2 Fe(II)-[cytochrome b5] + NAD(+) + H(+). It catalyses the reaction 2 Fe(3+)-[Dph3] + NADH = 2 Fe(2+)-[Dph3] + NAD(+) + H(+). Its pathway is protein modification; peptidyl-diphthamide biosynthesis. Competitively inhibited by NAD(+). Inhibited by mercurials such as p-chloromercuribenzoate (PCMB) and HgCl(2). Enzymatic activity increases under anaerobic conditions. Functionally, NADH-dependent reductase for KTI11/DPH3 and cytochrome b5. Required for the first step of diphthamide biosynthesis, a post-translational modification of histidine which occurs in elongation factor 2. DPH1 and DPH2 transfer a 3-amino-3-carboxypropyl (ACP) group from S-adenosyl-L-methionine (SAM) to a histidine residue, the reaction is assisted by a reduction system comprising KTI11/DPH3 and a NADH-dependent reductase, predominantly CBR1. By reducing KTI11/DPH3, also involved in the formation of the tRNA wobble base modification mcm5s 2U (5-methoxycarbonylmethyl-2-thiouridine), mediated by the elongator complex. The cytochrome b5/NADH cytochrome b5 reductase electron transfer system supports the catalytic activity of several sterol biosynthetic enzymes. Plays a role in bud morphology. This chain is NADH-cytochrome b5 reductase 1 (CBR1), found in Saccharomyces cerevisiae (strain YJM789) (Baker's yeast).